A 161-amino-acid polypeptide reads, in one-letter code: DNA-directed RNA polymerase III subunit RPC9 (161 aa).

Residues 75 to 96 (QEDEGEERESSGAKDAEKSGIS) form a disordered region. Positions 82 to 96 (RESSGAKDAEKSGIS) are enriched in basic and acidic residues.

It belongs to the eukaryotic RPC9 RNA polymerase subunit family. In terms of assembly, component of the RNA polymerase III (Pol III) complex consisting of 17 subunits. Forms a Pol III subcomplex with RPC25/RPC8. Interacts with BURF1/TDS4.

It is found in the nucleus. In terms of biological role, DNA-dependent RNA polymerase catalyzes the transcription of DNA into RNA using the four ribonucleoside triphosphates as substrates. Specific peripheric component of RNA polymerase III which synthesizes small RNAs, such as 5S rRNA and tRNAs. The RPC25/RPC8-RPC17/RPC9 subcomplex may bind Pol III transcripts emerging from the adjacent exit pore during elongation. In Saccharomyces cerevisiae (strain ATCC 204508 / S288c) (Baker's yeast), this protein is DNA-directed RNA polymerase III subunit RPC9 (RPC17).